The following is a 456-amino-acid chain: MAMRKGKEYELNIEEIEFPSMGIAYHEGLKVYVKHGIPGQKVLARITTKKKDHAKGKIIEVLEDLPYKIEAKCPAFGQCGGCAHQDIPYEKQLEIKQHEILELFKKANLDGFDFLPIEGSPKQYEYRNKMEFTFGDLKKGGELNLGMHAKGMSFGIISADECKIVDEDYRNILNATLNYFREKQLPHYRIMAREGYLRNLVIRKAENTGEVLVNLVTTSQIDFNLDEYTEIIKSINYKGNLVGILHTINDSLSDVVQCDKLNILYGRDYIIEDLLGLKFKITPLSFFQTNSKGAEKLYSIVRDFIGESKSKTVFDLYCGTGTIGQIVAPEAKKVIGIELIEEAVESARENAKLNNLNNCEFIAGDIAQVIKEVKQKPDVIILDPPRPGVHPKALEYVIKFDSPTIVYVSCNPKTLVEDLKVLVENGYVIEKVKGMDMFPSTPHVETVVGLRRKDTL.

The TRAM domain occupies 2-60; sequence AMRKGKEYELNIEEIEFPSMGIAYHEGLKVYVKHGIPGQKVLARITTKKKDHAKGKIIE. Cys73, Cys79, Cys82, and Cys162 together coordinate [4Fe-4S] cluster. 4 residues coordinate S-adenosyl-L-methionine: Gln288, Tyr317, Glu338, and Asp383. The Nucleophile role is filled by Cys410.

The protein belongs to the class I-like SAM-binding methyltransferase superfamily. RNA M5U methyltransferase family.

This is an uncharacterized protein from Clostridium tetani (strain Massachusetts / E88).